The following is a 216-amino-acid chain: Glycerol-3-phosphate acyltransferase 3 (216 aa).

The next 5 membrane-spanning stretches (helical) occupy residues 6-26 (LLLV…YLVS), 58-78 (LVAS…GLVI), 92-112 (LLFA…WPVF), 125-145 (FGGM…VLII), and 158-178 (ITGV…SGFP).

The protein belongs to the PlsY family. Probably interacts with PlsX.

Its subcellular location is the cell membrane. It catalyses the reaction an acyl phosphate + sn-glycerol 3-phosphate = a 1-acyl-sn-glycero-3-phosphate + phosphate. The protein operates within lipid metabolism; phospholipid metabolism. Catalyzes the transfer of an acyl group from acyl-phosphate (acyl-PO(4)) to glycerol-3-phosphate (G3P) to form lysophosphatidic acid (LPA). This enzyme utilizes acyl-phosphate as fatty acyl donor, but not acyl-CoA or acyl-ACP. The chain is Glycerol-3-phosphate acyltransferase 3 from Dehalococcoides mccartyi (strain CBDB1).